Reading from the N-terminus, the 1842-residue chain is MALRGPMKRSHLRQVSAPSVDSLSVPQSQSPEALYNDEHSHQDVHATPDERTIRLSSASLERRQCSLWVHDETFSREEILFNQAAFSDLRVNVGDVIEILPVRSPGDSIHSLKSDLGARSLRDSYLESGSAHLPDPMSKFKTPLQSRCLFVVKPLPQEIKARHPKLEISVTHSVANIFGFKNRTLVNISVVDRGQCSASHVDIAFRDQFLVRSDMWRLVMSELADKIIYKGQKIVFMGSIKATVKNIFIRGKKVLSGYFSPHTIPVFRSESAKYVLFIQMSREMWDFDSEGTGDILFSRVINGFLPELFKRWANSDAKHLVTIVLFTRVEYGSSALGDPLPLSSESLRCISSPNHVPTRDFYRVVVNDMASGHWTTILDELKKDFRTFLRDVSILKMDSPDTPTVDGVKVAPKNKPAIIAGRPSTALRGNILEAIHLASAHLAYDHIDRDMVHTGTSIIVITPGSGVFEVSYESLSSTSEALADRGIAIDLVCLSPMPLHSVPLFKYKAPVERSGSSSFGDFHSSGYSPEMRQSFSFASRTPHLSPKSTMQGSFPGMTHKEHLSARSNEWNYGIPHWLDISYWNPETYREARRIAKKDPNAPIPFTVTKQSKLFVPRVRMYEIQMMGVMESEQSDISIPYLLEGQGVSRTSNAGLGLSPSGLSSSRASFRRNSSYKAQLSDSLRPEPFLQSITNPKDVMLAKSKKTPNQVIAWMDQYDEAVFQPFAKRRQQRKASRPKRPSEPEVQVSNAHERLSARSVLRLREHETNSNSGDRSYPTRTIPRVSETSLSAPQGPVPSKTSSPKKPALKAPSAARTPRMSRTISFALLGFGATPPRAQASTEVNVEHARAQPTSGQKKPSVGFMDTRSVESFSGSDSASISTVIDTSLRPASPHPAPQKSAMTPTRPISIKVPPRQPSEDTEPVDRTVLPESYSTTSTAIPFTGDGRRDSRTKNGPRFELTVSGGSRESSIKSPQNKALAPWVRSINPCNTSRDVLRDTSWFGRWQHAYPRPPHVAVVKWKSLKSPAILPLTTEEFPTAQELGSDYLQTPYRVFPNDDPEGVEVPKTRGILLREMISLRLSHGFQIVIGKHVAEASGQPALETLNVFDTRSLERDGATVFLSKGNTIHRLICVDGGEIEVTRFTHRTSSTLAAGKRDDFSLYTPAMRTILSTEYELKNIKLDPTAEDYNWNYADNYVAGHRDYLFNPAQQLQFWRVRYVLIPMPLQVNNRRHLQSFNEDNEEEIHLLGINQLTHIWQRHRYVPPEEKRFESSNEKKDQNPLNIMYQTRNPSEVVAAELDRILLSDPGLDNSPAQLLPESELLERSSISLSSLAQIIQGEKGVRMMDRRWHWRLHYNCFIGFEFTTWLLQNFRDIDSREEAVQFGNELMKHGLFQHVEKRHNFRDGNYFYQISSEYRVARPESRGSWFPQKKSDKTVPSTAASENPRDSPVNGHSRSDSVETLPPHMPATPSKSKNKATIMLSKMMKYDVDPRKRSNRPEVIDLHYDRLHNPDNCFHIELSWMNTTPKLIEDTVLSWAATAEKFGLKLVQVPIAEGCAISRTQPFRKPYRVSLTVPPPPGPVPTVFNTATFSQLGSSDRHYYHKAMLRKFDFVLDFEARSAFPADVEVSYSWGTPDYQYPQYIHRSGSLLVQITDEGDFLFLANRLVSTRLAAATREGSRYERMDRPEHLRARASTYDPLDRISPRLSPLVRPLHDIGSPISPQGQPSIDSAHLYRAPEHILKSFEEFCNDAARLEQFYSVSHARPVSTKVGPAPTTLMDSSIPTLELPASVVSHHIHPPALMSRASVDGSIPSIDAMTRARNDSLSYKGSPKSGSLRPLNMT.

Over residues 1–12 (MALRGPMKRSHL) the composition is skewed to basic residues. Disordered regions lie at residues 1-49 (MALR…ATPD), 728-817 (RRQQ…ARTP), and 887-976 (SLRP…SPQN). The segment covering 16–31 (SAPSVDSLSVPQSQSP) has biased composition (polar residues). Positions 36 to 49 (NDEHSHQDVHATPD) are enriched in basic and acidic residues. Residues 728–738 (RRQQRKASRPK) are compositionally biased toward basic residues. Basic and acidic residues predominate over residues 750 to 767 (AHERLSARSVLRLREHET). Residues 797 to 814 (PSKTSSPKKPALKAPSAA) are compositionally biased toward low complexity. Positions 963–976 (SGGSRESSIKSPQN) are enriched in polar residues. Positions 1338 to 1413 (GEKGVRMMDR…DGNYFYQISS (76 aa)) constitute a DEP domain. Disordered stretches follow at residues 1422 to 1475 (SRGS…KSKN) and 1822 to 1842 (NDSL…LNMT).

Belongs to the IML1 family.

It is found in the vacuole membrane. The protein is Vacuolar membrane-associated protein iml1 (iml1) of Neosartorya fischeri (strain ATCC 1020 / DSM 3700 / CBS 544.65 / FGSC A1164 / JCM 1740 / NRRL 181 / WB 181) (Aspergillus fischerianus).